Consider the following 150-residue polypeptide: Flagellar assembly factor FliW (150 aa).

The protein belongs to the FliW family. In terms of assembly, interacts with translational regulator CsrA and flagellin(s).

It localises to the cytoplasm. In terms of biological role, acts as an anti-CsrA protein, binds CsrA and prevents it from repressing translation of its target genes, one of which is flagellin. Binds to flagellin and participates in the assembly of the flagellum. The polypeptide is Flagellar assembly factor FliW (Leptospira interrogans serogroup Icterohaemorrhagiae serovar copenhageni (strain Fiocruz L1-130)).